Consider the following 247-residue polypeptide: Coproheme decarboxylase (247 aa).

Fe-coproporphyrin III is bound by residues Arg129, 143-147 (YPMDK), His170, Gln183, and Ser221. Tyr143 is an active-site residue.

Belongs to the ChdC family. Type 1 subfamily. Requires Fe-coproporphyrin III as cofactor.

It catalyses the reaction Fe-coproporphyrin III + 2 H2O2 + 2 H(+) = heme b + 2 CO2 + 4 H2O. It carries out the reaction Fe-coproporphyrin III + H2O2 + H(+) = harderoheme III + CO2 + 2 H2O. The enzyme catalyses harderoheme III + H2O2 + H(+) = heme b + CO2 + 2 H2O. The protein operates within porphyrin-containing compound metabolism; protoheme biosynthesis. Functionally, involved in coproporphyrin-dependent heme b biosynthesis. Catalyzes the decarboxylation of Fe-coproporphyrin III (coproheme) to heme b (protoheme IX), the last step of the pathway. The reaction occurs in a stepwise manner with a three-propionate intermediate. This is Coproheme decarboxylase from Bacillus cereus (strain B4264).